The primary structure comprises 429 residues: Adenylosuccinate synthetase (429 aa).

Residues 12–18 and 40–42 contribute to the GTP site; these read GDEGKGK and GHT. Residue D13 is the Proton acceptor of the active site. Residues D13 and G40 each contribute to the Mg(2+) site. Residues 13 to 16, 38 to 41, T129, R143, Q223, T238, and R302 contribute to the IMP site; these read DEGK and NAGH. H41 serves as the catalytic Proton donor. 298-304 lines the substrate pocket; it reads VVTGRKR. GTP contacts are provided by residues R304, 330-332, and 412-414; these read KLD and STS.

The protein belongs to the adenylosuccinate synthetase family. As to quaternary structure, homodimer. It depends on Mg(2+) as a cofactor.

It is found in the cytoplasm. The catalysed reaction is IMP + L-aspartate + GTP = N(6)-(1,2-dicarboxyethyl)-AMP + GDP + phosphate + 2 H(+). The protein operates within purine metabolism; AMP biosynthesis via de novo pathway; AMP from IMP: step 1/2. In terms of biological role, plays an important role in the de novo pathway of purine nucleotide biosynthesis. Catalyzes the first committed step in the biosynthesis of AMP from IMP. The polypeptide is Adenylosuccinate synthetase (Brucella abortus (strain 2308)).